A 253-amino-acid polypeptide reads, in one-letter code: DNA repair protein RecO (253 aa).

It belongs to the RecO family.

Its function is as follows. Involved in DNA repair and RecF pathway recombination. In Nitrobacter hamburgensis (strain DSM 10229 / NCIMB 13809 / X14), this protein is DNA repair protein RecO.